Reading from the N-terminus, the 185-residue chain is Elongation factor P (185 aa).

It belongs to the elongation factor P family.

The protein resides in the cytoplasm. Its pathway is protein biosynthesis; polypeptide chain elongation. Functionally, involved in peptide bond synthesis. Stimulates efficient translation and peptide-bond synthesis on native or reconstituted 70S ribosomes in vitro. Probably functions indirectly by altering the affinity of the ribosome for aminoacyl-tRNA, thus increasing their reactivity as acceptors for peptidyl transferase. This Burkholderia lata (strain ATCC 17760 / DSM 23089 / LMG 22485 / NCIMB 9086 / R18194 / 383) protein is Elongation factor P.